A 169-amino-acid chain; its full sequence is Ribosome maturation factor RimM (169 aa).

The 73-residue stretch at 97–169 (PGEYYWYQLI…VITVDWDMNF (73 aa)) folds into the PRC barrel domain.

Belongs to the RimM family. In terms of assembly, binds ribosomal protein uS19.

The protein resides in the cytoplasm. In terms of biological role, an accessory protein needed during the final step in the assembly of 30S ribosomal subunit, possibly for assembly of the head region. Essential for efficient processing of 16S rRNA. May be needed both before and after RbfA during the maturation of 16S rRNA. It has affinity for free ribosomal 30S subunits but not for 70S ribosomes. This is Ribosome maturation factor RimM from Legionella pneumophila (strain Paris).